Here is a 142-residue protein sequence, read N- to C-terminus: Baculoviral IAP repeat-containing protein 5 (142 aa).

One copy of the BIR repeat lies at 18–88 (RVSTFKNWPF…KHSSGCAFLS (71 aa)). Residue Ser20 is modified to Phosphoserine; by AURKC. Position 23 is an N6-acetyllysine (Lys23). Thr34 carries the post-translational modification Phosphothreonine; by CDK1 and CDK15. Thr48 carries the phosphothreonine modification. 4 residues coordinate Zn(2+): Cys57, Cys60, His77, and Cys84. Lys90, Lys110, Lys112, and Lys115 each carry N6-acetyllysine. Thr117 is subject to Phosphothreonine; by AURKB. N6-acetyllysine is present on Lys129.

The protein belongs to the IAP family. Monomer or homodimer. Exists as a homodimer in the apo state and as a monomer in the CPC-bound state. The monomer protects cells against apoptosis more efficiently than the dimer. Only the dimeric form is capable of enhancing tubulin stability in cells. When phosphorylated, interacts with LAMTOR5/HBXIP; the resulting complex binds pro-CASP9, as well as active CASP9, but much less efficiently. Component of the chromosomal passenger complex (CPC) composed of at least BIRC5/survivin, CDCA8/borealin, INCENP, AURKB or AURKC; in the complex forms a triple-helix bundle-based subcomplex with INCENP and CDCA8. Interacts with JTB. Interacts (via BIR domain) with histone H3 phosphorylated at 'Thr-3' (H3pT3). Interacts with EVI5. Interacts with GTP-bound RAN in both the S and M phases of the cell cycle. Interacts with USP9X. Interacts with tubulin. Interacts with BIRC2/c-IAP1. The acetylated form at Lys-129 interacts with STAT3. The monomeric form deacetylated at Lys-129 interacts with XPO1/CRM1. The monomeric form interacts with XIAP/BIRC4. Both the dimeric and monomeric form can interact with DIABLO/SMAC. Interacts with BIRC6/bruce. Interacts with FBXL7; this interaction facilitates the polyubiquitination and subsequent proteasomal degradation of BIRC5 by the SCF(FBXL7) E3 ubiquitin-protein ligase complex. Ubiquitinated by the Cul9-RING ubiquitin-protein ligase complex, leading to its degradation. Ubiquitination is required for centrosomal targeting. Deubiquitinated by USP35 or USP38; leading to stabilization. In terms of processing, acetylation at Lys-129 results in its homodimerization, while deacetylation promotes the formation of monomers which heterodimerize with XPO1/CRM1 which facilitates its nuclear export. The acetylated form represses STAT3 transactivation. The dynamic equilibrium between its acetylation and deacetylation at Lys-129 determines its interaction with XPO1/CRM1, its subsequent subcellular localization, and its ability to inhibit STAT3 transactivation. Post-translationally, in vitro phosphorylation at Thr-117 by AURKB prevents interaction with INCENP and localization to mitotic chromosomes. Phosphorylation at Thr-48 by CK2 is critical for its mitotic and anti-apoptotic activities. Phosphorylation at Thr-34 by CDK15 is critical for its anti-apoptotic activity. Phosphorylation at Ser-20 by AURKC is critical for regulation of proper chromosome alignment and segregation, and possibly cytokinesis.

Its subcellular location is the cytoplasm. It is found in the nucleus. It localises to the chromosome. The protein localises to the centromere. The protein resides in the cytoskeleton. Its subcellular location is the spindle. It is found in the kinetochore. It localises to the midbody. Functionally, multitasking protein that has dual roles in promoting cell proliferation and preventing apoptosis. Component of a chromosome passage protein complex (CPC) which is essential for chromosome alignment and segregation during mitosis and cytokinesis. Acts as an important regulator of the localization of this complex; directs CPC movement to different locations from the inner centromere during prometaphase to midbody during cytokinesis and participates in the organization of the center spindle by associating with polymerized microtubules. Involved in the recruitment of CPC to centromeres during early mitosis via association with histone H3 phosphorylated at 'Thr-3' (H3pT3) during mitosis. The complex with RAN plays a role in mitotic spindle formation by serving as a physical scaffold to help deliver the RAN effector molecule TPX2 to microtubules. May counteract a default induction of apoptosis in G2/M phase. The acetylated form represses STAT3 transactivation of target gene promoters. May play a role in neoplasia. Inhibitor of CASP3 and CASP7. Essential for the maintenance of mitochondrial integrity and function. The protein is Baculoviral IAP repeat-containing protein 5 (BIRC5) of Bos taurus (Bovine).